We begin with the raw amino-acid sequence, 2035 residues long: Host cell factor 1 (2035 aa).

At Ala2 the chain carries N-acetylalanine. At Ser6 the chain carries Phosphoserine. Kelch repeat units follow at residues 44-89 (LIVV…GFVC), 93-140 (RLLV…RLGH), 148-194 (KCYL…ITYG), 217-265 (KLVI…TIGN), and 266-313 (KMYV…LMDT). Glycyl lysine isopeptide (Lys-Gly) (interchain with G-Cter in ubiquitin) cross-links involve residues Lys105, Lys163, and Lys244. Lys282 participates in a covalent cross-link: Glycyl lysine isopeptide (Lys-Gly) (interchain with G-Cter in SUMO2). An N6-acetyllysine modification is found at Lys288. Lys363 is covalently cross-linked (Glycyl lysine isopeptide (Lys-Gly) (interchain with G-Cter in ubiquitin)). Residues 366 to 466 (PPARVQLVRA…TTTTIQVLPT (101 aa)) enclose the Fibronectin type-III 1 domain. A disordered region spans residues 407-434 (ATATSPTPNPVPSVPANPPKSPAPAAAA). Ser411 is modified (phosphoserine). A compositionally biased stretch (pro residues) spans 413-428 (TPNPVPSVPANPPKSP). A required for interaction with OGT region spans residues 500-550 (LVTMRPASQAGKAPVTVTSLPAGVRMVVPTQSAQGTVIGSSPQMSGMAALA). Omega-N-methylarginine occurs at positions 504 and 524. Residues Ser598, Ser666, and Ser669 each carry the phosphoserine modification. Residues 610–722 (LKTAAAQVGT…KGPLPAGTIL (113 aa)) are interaction with SIN3A. Residues 750–902 (ILGISSVSPS…SLAGAGGHST (153 aa)) form an interaction with ZBTB17 region. An N6-acetyllysine modification is found at Lys813. Positions 813–912 (KIITAVPKIA…SASLATPITT (100 aa)) are interaction with GABP2. HCF repeat repeat units follow at residues 1010 to 1035 (TLVC…TVVA), 1072 to 1097 (VRVC…ATSN), and 1101 to 1126 (QHGC…AMSS). An HCF repeat 4; degenerate repeat occupies 1158-1183 (AAQGSKSQCQTRQTSATSTTMTVMAT). Ser1205 is subject to Phosphoserine. Arg1219 carries the omega-N-methylarginine modification. Position 1224 is a phosphoserine (Ser1224). HCF repeat repeat units lie at residues 1286–1311 (TQVC…SNAG) and 1314–1339 (QRVC…ATSN). 3 disordered regions span residues 1292–1371 (PPCE…TMSV), 1435–1470 (TVTS…TSSS), and 1487–1515 (VTQS…QQLP). Low complexity-rich tracts occupy residues 1299-1312 (TGTT…NAGS), 1329-1339 (TTHTATTATSN), and 1362-1371 (TTSTGTTMSV). An HCF repeat 7; degenerate repeat occupies 1349–1374 (QQPPAGRPCETHQTTSTGTTMSVSVG). The stretch at 1414–1439 (QRVCSNPPCETHETGTTHTATTVTSN) is one HCF repeat 8 repeat. Thr1491 bears the Phosphothreonine mark. The segment covering 1493 to 1502 (VPGPSVPPPE) has biased composition (pro residues). Ser1497, Ser1507, and Ser1771 each carry phosphoserine. 2 Fibronectin type-III domains span residues 1797 to 1888 (LPPP…TCLP) and 1890 to 2006 (FPGA…TSKD). Residues Lys1807 and Lys1808 each participate in a glycyl lysine isopeptide (Lys-Gly) (interchain with G-Cter in ubiquitin) cross-link. Phosphoserine is present on Ser1838. The segment at 1994 to 2035 (ATQVRWLQETSKDSSGTKPANKRPMSSPEMKSAPKKSKADGQ) is disordered. An N6-acetyllysine modification is found at Lys2005. Lys2024 is covalently cross-linked (Glycyl lysine isopeptide (Lys-Gly) (interchain with G-Cter in SUMO2)).

Composed predominantly of six polypeptides ranging from 110 to 150 kDa and a minor 300 kDa polypeptide. The majority of N- and C-terminal cleavage products remain tightly, albeit non-covalently, associated. Interacts with POU2F1, CREB3, ZBTB17, EGR2, E2F4, CREBZF, SP1, GABP2, Sin3 HDAC complex (SIN3A, HDAC1, HDAC2, SUDS3), SAP30, SIN3B and FHL2. Component of a MLL1 complex, composed of at least the core components KMT2A/MLL1, ASH2L, HCFC1, WDR5 and RBBP5, as well as the facultative components BACC1, CHD8, DPY30, E2F6, HCFC2, HSP70, INO80C, KANSL1, LAS1L, MAX, MCRS1, MEN1, MGA, KAT8, PELP1, PHF20, PRP31, RING2, RUVBL1, RUVBL2, SENP3, TAF1, TAF4, TAF6, TAF7, TAF9 and TEX10. Component of a THAP1/THAP3-HCFC1-OGT complex that is required for the regulation of the transcriptional activity of RRM1. Interacts directly with THAP3 (via its HBM). Interacts (via the Kelch-repeat domain) with THAP1 (via the HBM); the interaction recruits HCHC1 to the RRM1. Interacts with THAP7 and THAP11 (via the HMB). Interacts directly with OGT; the interaction, which requires the HCFC1 cleavage site domain, glycosylates and promotes the proteolytic processing of HCFC1, retains OGT in the nucleus and impacts the expression of herpes simplex virus immediate early viral genes. Component of the SET1 complex, at least composed of the catalytic subunit (SETD1A or SETD1B), WDR5, WDR82, RBBP5, ASH2L, CXXC1, HCFC1 and DPY30. Component of the NSL complex at least composed of MOF/KAT8, KANSL1, KANSL2, KANSL3, MCRS1, PHF20, OGT1/OGT, WDR5 and HCFC1. Component of a complex at least composed of ZNF335, HCFC1, CCAR2, EMSY, MKI67, RBBP5, ASH2L and WDR5; the complex is formed as a result of interactions between components of a nuclear receptor-mediated transcription complex and a histone methylation complex. Within the complex interacts with ZNF335. Interacts with TET2 and TET3. Interacts with HCFC1R1. Interacts with THAP11. Interacts (via Kelch domain) with KMT2E/MLL5 isoform 3 (via HBM motif). Interacts with E2F1. Accessory scaffold component of the polycomb repressive deubiquitinase (PR-DUB) complex, at least composed of BAP1, one of ASXL1, ASXL2 or (probably) ASXL3 and one of MBD5 or MBD6; the PR-DUB core associates with a number of accessory proteins, including FOXK1, FOXK2, KDM1B, HCFC1, YY1 and OGT. Interacts with YY1 (via Gly-rich region); the interaction is direct. Interacts with BAP1 (via HBM-like motif). In terms of assembly, (Microbial infection) Associates with the VP16-induced complex; binding to HCFC1 activates the viral transcriptional activator VP16 for association with POU2F1, to form a multiprotein-DNA complex responsible for activating transcription of the viral immediate early genes. Interacts with the viral transactivator protein VP16. Post-translationally, proteolytically cleaved at one or several PPCE--THET sites within the HCF repeats. Further cleavage of the primary N- and C-terminal chains results in a 'trimming' and accumulation of the smaller chains. Cleavage is promoted by O-glycosylation. O-glycosylated. GlcNAcylation by OGT promotes proteolytic processing. In terms of processing, ubiquitinated. Lys-1807 and Lys-1808 are ubiquitinated both via 'Lys-48'- and 'Lys-63'-linked polyubiquitin chains. BAP1 mediated deubiquitination of 'Lys-48'-linked polyubiquitin chains; deubiquitination by BAP1 does not seem to stabilize the protein. As to expression, highly expressed in fetal tissues and the adult kidney. Present in all tissues tested.

It localises to the cytoplasm. It is found in the nucleus. Its function is as follows. Transcriptional coregulator. Serves as a scaffold protein, bridging interactions between transcription factors, including THAP11 and ZNF143, and transcriptional coregulators. Involved in control of the cell cycle. Also antagonizes transactivation by ZBTB17 and GABP2; represses ZBTB17 activation of the p15(INK4b) promoter and inhibits its ability to recruit p300. Coactivator for EGR2 and GABP2. Tethers the chromatin modifying Set1/Ash2 histone H3 'Lys-4' methyltransferase (H3K4me) and Sin3 histone deacetylase (HDAC) complexes (involved in the activation and repression of transcription, respectively) together. Component of a THAP1/THAP3-HCFC1-OGT complex that is required for the regulation of the transcriptional activity of RRM1. As part of the NSL complex it may be involved in acetylation of nucleosomal histone H4 on several lysine residues. Recruits KMT2E/MLL5 to E2F1 responsive promoters promoting transcriptional activation and thereby facilitates G1 to S phase transition. Modulates expression of homeobox protein PDX1, perhaps acting in concert with transcription factor E2F1, thereby regulating pancreatic beta-cell growth and glucose-stimulated insulin secretion. May negatively modulate transcriptional activity of FOXO3. Functionally, (Microbial infection) In case of human herpes simplex virus (HSV) infection, HCFC1 forms a multiprotein-DNA complex with the viral transactivator protein VP16 and POU2F1 thereby enabling the transcription of the viral immediate early genes. The polypeptide is Host cell factor 1 (Homo sapiens (Human)).